A 324-amino-acid chain; its full sequence is Beta-ketoacyl-[acyl-carrier-protein] synthase III (324 aa).

Catalysis depends on residues Cys-114 and His-251. The interval 252 to 256 is ACP-binding; it reads QANLR. Residue Asn-281 is part of the active site.

Belongs to the thiolase-like superfamily. FabH family. Homodimer.

Its subcellular location is the cytoplasm. It catalyses the reaction malonyl-[ACP] + acetyl-CoA + H(+) = 3-oxobutanoyl-[ACP] + CO2 + CoA. The protein operates within lipid metabolism; fatty acid biosynthesis. Catalyzes the condensation reaction of fatty acid synthesis by the addition to an acyl acceptor of two carbons from malonyl-ACP. Catalyzes the first condensation reaction which initiates fatty acid synthesis and may therefore play a role in governing the total rate of fatty acid production. Possesses both acetoacetyl-ACP synthase and acetyl transacylase activities. Its substrate specificity determines the biosynthesis of branched-chain and/or straight-chain of fatty acids. This Rhodobacter capsulatus (Rhodopseudomonas capsulata) protein is Beta-ketoacyl-[acyl-carrier-protein] synthase III.